A 222-amino-acid polypeptide reads, in one-letter code: Large ribosomal subunit protein bL25 (222 aa).

The protein belongs to the bacterial ribosomal protein bL25 family. CTC subfamily. Part of the 50S ribosomal subunit; part of the 5S rRNA/L5/L18/L25 subcomplex. Contacts the 5S rRNA. Binds to the 5S rRNA independently of L5 and L18.

This is one of the proteins that binds to the 5S RNA in the ribosome where it forms part of the central protuberance. The sequence is that of Large ribosomal subunit protein bL25 from Ruthia magnifica subsp. Calyptogena magnifica.